The following is a 174-amino-acid chain: Ribosome maturation factor RimP (174 aa).

It belongs to the RimP family.

It is found in the cytoplasm. Functionally, required for maturation of 30S ribosomal subunits. The protein is Ribosome maturation factor RimP of Acinetobacter baylyi (strain ATCC 33305 / BD413 / ADP1).